The chain runs to 351 residues: UDP-3-O-acylglucosamine N-acyltransferase (351 aa).

H257 serves as the catalytic Proton acceptor.

It belongs to the transferase hexapeptide repeat family. LpxD subfamily. As to quaternary structure, homotrimer.

The catalysed reaction is a UDP-3-O-[(3R)-3-hydroxyacyl]-alpha-D-glucosamine + a (3R)-hydroxyacyl-[ACP] = a UDP-2-N,3-O-bis[(3R)-3-hydroxyacyl]-alpha-D-glucosamine + holo-[ACP] + H(+). The protein operates within bacterial outer membrane biogenesis; LPS lipid A biosynthesis. Functionally, catalyzes the N-acylation of UDP-3-O-acylglucosamine using 3-hydroxyacyl-ACP as the acyl donor. Is involved in the biosynthesis of lipid A, a phosphorylated glycolipid that anchors the lipopolysaccharide to the outer membrane of the cell. In Brucella abortus (strain S19), this protein is UDP-3-O-acylglucosamine N-acyltransferase.